Consider the following 652-residue polypeptide: MSQVHKHAIPSAIAEHALINPTQYQQYYQQSVQDPETFWGEQGKILDWIKPYSRVKNTSFDPGHISIRWFEDGTLNLAANCLDRHLAERGDQTAIIWEGDDPTQSKQVTYKQLHHDVCQFANVLKKLGVKKGDVVAIYMPMVPEAAVAMLACARIGAVHSVIFGGFSPEAVAGRIIDSNSKLVITADEGLRAGRAVPLKKNVDDALKNPGVKSITNVVVFQRTGKPGYWQEGRDLWWHELTAGVSADCPPEEMNAEDPLFILYTSGSTGKPKGVLHTTGGYLVYAAMTFKYVFDYHDGDVYWCTADVGWVTGHSYLLYGPLACGAITLMFEGVPNYPGVNRLSQVIDKHQVNILYTAPTAIRALMAEGDKAIEGTKRDSLRIMGSVGEPINPEAWEWYYNKIGNAKCPIVDTWWQTETGGFMITPLPGATELKAGSATRPFFGVQPALVDNIGTVQEGACEGNLVITDSWPGQARTLFGDHDRFEQTYFSTFKGMYFSGDGARRDEDGYYWITGRVDDVLNVSGHRLGTAEIESALVSHPKIAEAAVVGIPHNIKGQAIYAYITLNHGEEPTPELYTEVRNWVRKEIGPIATPDVLHWTDSLPKTRSGKIMRRILRKIAAGDTSNLGDTSTLADPAVVDKLLEEKQSMKVPS.

CoA-binding positions include 191-194 (RAGR), T311, and N335. Residues 387 to 389 (GEP), 411 to 416 (DTWWQT), D500, and R515 each bind ATP. S523 contacts CoA. R526 is a binding site for ATP. Mg(2+) is bound by residues V537, H539, and I542. R584 is a CoA binding site. K609 carries the N6-acetyllysine modification.

This sequence belongs to the ATP-dependent AMP-binding enzyme family. It depends on Mg(2+) as a cofactor. In terms of processing, acetylated. Deacetylation by the SIR2-homolog deacetylase activates the enzyme.

It catalyses the reaction acetate + ATP + CoA = acetyl-CoA + AMP + diphosphate. Its function is as follows. Catalyzes the conversion of acetate into acetyl-CoA (AcCoA), an essential intermediate at the junction of anabolic and catabolic pathways. Acs undergoes a two-step reaction. In the first half reaction, Acs combines acetate with ATP to form acetyl-adenylate (AcAMP) intermediate. In the second half reaction, it can then transfer the acetyl group from AcAMP to the sulfhydryl group of CoA, forming the product AcCoA. Enables the cell to use acetate during aerobic growth to generate energy via the TCA cycle, and biosynthetic compounds via the glyoxylate shunt. Acetylates CheY, the response regulator involved in flagellar movement and chemotaxis. The sequence is that of Acetyl-coenzyme A synthetase from Serratia proteamaculans (strain 568).